Consider the following 387-residue polypeptide: F420-dependent formate dehydrogenase 1 subunit beta (387 aa).

2 consecutive 4Fe-4S ferredoxin-type domains span residues 275-298 (TIEE…VCPV) and 326-355 (VRMS…ARIF). Residues cysteine 286, cysteine 289, cysteine 292, cysteine 296, cysteine 335, cysteine 338, cysteine 341, and cysteine 345 each coordinate [4Fe-4S] cluster. Residues 366–387 (LGYRPGVDDEAPPALGGSCPTQ) form a disordered region.

It belongs to the FrhB family. As to quaternary structure, dimer of an alpha (FdhA1) and a beta (FdhB1) subunit. [4Fe-4S] cluster serves as cofactor. It depends on FAD as a cofactor. The cofactor is Zn(2+).

The enzyme catalyses oxidized coenzyme F420-(gamma-L-Glu)(n) + formate + 2 H(+) = reduced coenzyme F420-(gamma-L-Glu)(n) + CO2. Catalyzes the oxidation of formate to carbon dioxide, with coenzyme F420 as the electron acceptor. In vitro can also use methyl viologen as electron acceptor. This chain is F420-dependent formate dehydrogenase 1 subunit beta, found in Methanococcus maripaludis (strain DSM 14266 / JCM 13030 / NBRC 101832 / S2 / LL).